The following is a 309-amino-acid chain: Aspartate carbamoyltransferase catalytic subunit (309 aa).

Carbamoyl phosphate contacts are provided by Arg-58 and Thr-59. Lys-86 contacts L-aspartate. Carbamoyl phosphate is bound by residues Arg-108, His-136, and Gln-139. L-aspartate-binding residues include Arg-170 and Arg-224. Positions 266 and 267 each coordinate carbamoyl phosphate.

Belongs to the aspartate/ornithine carbamoyltransferase superfamily. ATCase family. In terms of assembly, heterododecamer (2C3:3R2) of six catalytic PyrB chains organized as two trimers (C3), and six regulatory PyrI chains organized as three dimers (R2).

It catalyses the reaction carbamoyl phosphate + L-aspartate = N-carbamoyl-L-aspartate + phosphate + H(+). The protein operates within pyrimidine metabolism; UMP biosynthesis via de novo pathway; (S)-dihydroorotate from bicarbonate: step 2/3. In terms of biological role, catalyzes the condensation of carbamoyl phosphate and aspartate to form carbamoyl aspartate and inorganic phosphate, the committed step in the de novo pyrimidine nucleotide biosynthesis pathway. The protein is Aspartate carbamoyltransferase catalytic subunit of Campylobacter curvus (strain 525.92).